The sequence spans 390 residues: Nuclear receptor subfamily 2 group F member 6 (390 aa).

The span at 1-15 (MAMVTGGWGGPGGDT) shows a compositional bias: gly residues. A disordered region spans residues 1–50 (MAMVTGGWGGPGGDTNGVDKAGGSYPRATEDDSASPPGATSDAEPGDEER). A phosphoserine mark is found at Ser-35 and Ser-41. Residues 54 to 129 (QVDCVVCGDK…VGMRKEAVQP (76 aa)) constitute a DNA-binding region (nuclear receptor). 2 NR C4-type zinc fingers span residues 57 to 77 (CVVC…CEGC) and 93 to 117 (CRSN…LKKC). Residues 157-380 (PVSELIAQLL…TLIRDMLLSG (224 aa)) enclose the NR LBD domain. Positions 314–390 (LQEKAQVALT…STFNWPYGSG (77 aa)) are important for dimerization.

The protein belongs to the nuclear hormone receptor family. NR2 subfamily. As to quaternary structure, binds DNA as dimer; homodimer and heterodimer with NR2F2 and probably NR2F1. Interacts with THRB.

The protein localises to the nucleus. In terms of biological role, transcription factor predominantly involved in transcriptional repression. Binds to promoter/enhancer response elements that contain the imperfect 5'-AGGTCA-3' direct or inverted repeats with various spacings which are also recognized by other nuclear hormone receptors. Involved in modulation of hormonal responses. Represses transcriptional activity of the lutropin-choriogonadotropic hormone receptor/LHCGR gene, the renin/REN gene and the oxytocin-neurophysin/OXT gene. Represses the triiodothyronine-dependent and -independent transcriptional activity of the thyroid hormone receptor gene in a cell type-specific manner. The corepressing function towards thyroid hormone receptor beta/THRB involves at least in part the inhibition of THRB binding to triiodothyronine response elements (TREs) by NR2F6. Inhibits NFATC transcription factor DNA binding and subsequently its transcriptional activity. Acts as transcriptional repressor of IL-17 expression in Th-17 differentiated CD4(+) T cells and may be involved in induction and/or maintenance of peripheral immunological tolerance and autoimmunity. Involved in development of forebrain circadian clock; is required early in the development of the locus coeruleus (LC). This is Nuclear receptor subfamily 2 group F member 6 (Nr2f6) from Rattus norvegicus (Rat).